A 407-amino-acid chain; its full sequence is Tryptophan synthase beta chain (407 aa).

The segment covering 1 to 11 (MSTAPSQQHAS) has biased composition (polar residues). A disordered region spans residues 1–25 (MSTAPSQQHASAQVPDPRGRFGDFG). An N6-(pyridoxal phosphate)lysine modification is found at Lys100.

This sequence belongs to the TrpB family. As to quaternary structure, tetramer of two alpha and two beta chains. Pyridoxal 5'-phosphate serves as cofactor.

The enzyme catalyses (1S,2R)-1-C-(indol-3-yl)glycerol 3-phosphate + L-serine = D-glyceraldehyde 3-phosphate + L-tryptophan + H2O. Its pathway is amino-acid biosynthesis; L-tryptophan biosynthesis; L-tryptophan from chorismate: step 5/5. Its function is as follows. The beta subunit is responsible for the synthesis of L-tryptophan from indole and L-serine. This Rhodopirellula baltica (strain DSM 10527 / NCIMB 13988 / SH1) protein is Tryptophan synthase beta chain.